Consider the following 340-residue polypeptide: Phosphate acyltransferase (340 aa).

The interval 285-340 (WRQSGRPARHRGQEPRRHRQPRFWLCHRRGRRRSPRQRNRTHPGTGQPPAGCAGAR) is disordered. Residues 300–325 (RRHRQPRFWLCHRRGRRRSPRQRNRT) are compositionally biased toward basic residues.

Belongs to the PlsX family. Homodimer. Probably interacts with PlsY.

The protein localises to the cytoplasm. The catalysed reaction is a fatty acyl-[ACP] + phosphate = an acyl phosphate + holo-[ACP]. Its pathway is lipid metabolism; phospholipid metabolism. Functionally, catalyzes the reversible formation of acyl-phosphate (acyl-PO(4)) from acyl-[acyl-carrier-protein] (acyl-ACP). This enzyme utilizes acyl-ACP as fatty acyl donor, but not acyl-CoA. The polypeptide is Phosphate acyltransferase (Laribacter hongkongensis (strain HLHK9)).